We begin with the raw amino-acid sequence, 332 residues long: Phosphate acyltransferase (332 aa).

This sequence belongs to the PlsX family. As to quaternary structure, homodimer. Probably interacts with PlsY.

The protein resides in the cytoplasm. It carries out the reaction a fatty acyl-[ACP] + phosphate = an acyl phosphate + holo-[ACP]. It functions in the pathway lipid metabolism; phospholipid metabolism. Its function is as follows. Catalyzes the reversible formation of acyl-phosphate (acyl-PO(4)) from acyl-[acyl-carrier-protein] (acyl-ACP). This enzyme utilizes acyl-ACP as fatty acyl donor, but not acyl-CoA. The chain is Phosphate acyltransferase from Oceanobacillus iheyensis (strain DSM 14371 / CIP 107618 / JCM 11309 / KCTC 3954 / HTE831).